Here is a 265-residue protein sequence, read N- to C-terminus: Iron(3+)-hydroxamate import ATP-binding protein FhuC (265 aa).

Residues phenylalanine 12–proline 248 enclose the ABC transporter domain. ATP contacts are provided by residues glycine 44–serine 51 and cysteine 168–aspartate 179.

It belongs to the ABC transporter superfamily. Iron (Fe3+)-hydroxamate importer (TC 3.A.1.14.7) family. In terms of assembly, the complex is composed of two ATP-binding proteins (FhuC), a transmembrane protein (FhuB) and a solute-binding protein (FhuD). FhuC interacts with FhuB.

Its subcellular location is the cell inner membrane. It catalyses the reaction ATP + H2O + Fe(3+)-hydroxamate complex-[hydroxamate-binding protein]Side 1 = ADP + phosphate + Fe(3+)-hydroxamate complexSide 2 + [hydroxamate-binding protein]Side 1.. Its activity is regulated as follows. ATPase activity is inhibited by vanadate. In terms of biological role, part of the ABC transporter complex FhuCDB involved in iron(3+)-hydroxamate import. Responsible for energy coupling to the transport system. The polypeptide is Iron(3+)-hydroxamate import ATP-binding protein FhuC (fhuC) (Escherichia coli (strain K12)).